The primary structure comprises 142 residues: HTH-type transcriptional regulator MntR (142 aa).

The 63-residue stretch at 1–63 (MPTPSMEDYI…YEKYRGLILT (63 aa)) folds into the HTH dtxR-type domain. The Mn(2+) site is built by Asp-8, Glu-11, His-77, Glu-99, Glu-102, and His-103.

The protein belongs to the DtxR/MntR family. In terms of assembly, homodimer.

It localises to the cytoplasm. With respect to regulation, DNA binding is strongly activated by Mn(2+). In terms of biological role, central regulator of manganese homeostasis. The protein is HTH-type transcriptional regulator MntR of Listeria welshimeri serovar 6b (strain ATCC 35897 / DSM 20650 / CCUG 15529 / CIP 8149 / NCTC 11857 / SLCC 5334 / V8).